An 86-amino-acid chain; its full sequence is MKTLLLTLVVVTIVCLDLGYTLTCLNCPEMFCGKFQTCRDGEKICFKKLQQRRPFSLRYIRGCAATCPGTKPRDMVECCSTDRCNR.

The N-terminal stretch at Met1–Thr21 is a signal peptide. Intrachain disulfides connect Cys24-Cys45, Cys27-Cys32, Cys38-Cys63, Cys67-Cys78, and Cys79-Cys84.

Belongs to the three-finger toxin family. Ancestral subfamily. Orphan group II sub-subfamily. Expressed by the venom gland.

The protein localises to the secreted. Its function is as follows. Binds with low affinity to muscular (alpha-1-beta-1-delta-epsilon/CHRNA1-CHRNB1-CHRND-CHRNE) and very low affinity to neuronal (alpha-7/CHRNA7) nicotinic acetylcholine receptor (nAChR). This Naja sputatrix (Malayan spitting cobra) protein is Weak neurotoxin 6.